The chain runs to 30 residues: Hementerin (30 aa).

Requires Ca(2+) as cofactor.

It is found in the secreted. Fibrino(geno)lytic activity inhibited by EDTA but not by PMSF, E-64, 6-AHA and aprotinin. Functionally, cleaves fibrinogen Aalpha (FGA), gamma (FGG) and Bbeta (FGB) chains. Degrades cross-linked fibrin. Has no amidolytic, plasminogenolytic or caseinolytic activity. Inhibits platelet aggregation induced by collagen (IC(50)=7.5ug/ml) and various other agonists, presumably via activation of a nitridergic pathway. Inhibition is accompanied by reduced ATP release from and surface expression of SELP and CD63 on platelets as well as increased intracellular levels of Ca(2+), cGMP and nitric oxide synthase activity. The polypeptide is Hementerin (Haementeria depressa (Leech)).